The sequence spans 166 residues: Interferon gamma (166 aa).

A signal peptide spans 1 to 23; the sequence is MNYTSFILAFQLCAILGSSTYYC. Position 24 is a pyrrolidone carboxylic acid (Gln24). 2 N-linked (GlcNAc...) asparagine glycosylation sites follow: Asn39 and Asn106. The segment at 147 to 166 is disordered; that stretch reads ANLRKRKRSQNPFRGRRALQ. Residues 148 to 166 show a composition bias toward basic residues; the sequence is NLRKRKRSQNPFRGRRALQ.

The protein belongs to the type II (or gamma) interferon family. Homodimer. Interacts with IFNGR1 (via extracellular domain); this interaction promotes IFNGR1 dimerization. Released primarily from activated T lymphocytes.

It is found in the secreted. Its function is as follows. Type II interferon produced by immune cells such as T-cells and NK cells that plays crucial roles in antimicrobial, antiviral, and antitumor responses by activating effector immune cells and enhancing antigen presentation. Primarily signals through the JAK-STAT pathway after interaction with its receptor IFNGR1 to affect gene regulation. Upon IFNG binding, IFNGR1 intracellular domain opens out to allow association of downstream signaling components JAK2, JAK1 and STAT1, leading to STAT1 activation, nuclear translocation and transcription of IFNG-regulated genes. Many of the induced genes are transcription factors such as IRF1 that are able to further drive regulation of a next wave of transcription. Plays a role in class I antigen presentation pathway by inducing a replacement of catalytic proteasome subunits with immunoproteasome subunits. In turn, increases the quantity, quality, and repertoire of peptides for class I MHC loading. Increases the efficiency of peptide generation also by inducing the expression of activator PA28 that associates with the proteasome and alters its proteolytic cleavage preference. Up-regulates as well MHC II complexes on the cell surface by promoting expression of several key molecules such as cathepsins B/CTSB, H/CTSH, and L/CTSL. Participates in the regulation of hematopoietic stem cells during development and under homeostatic conditions by affecting their development, quiescence, and differentiation. The sequence is that of Interferon gamma (IFNG) from Equus asinus (Donkey).